The primary structure comprises 547 residues: MYYYLEIECESPVKDIFTCNKRRASKVVGNSFGGDHFNFRLGEIKLLSMDFPSSKVPEVEETSLGHGVVHLYRVFPSESHEFDAPGLILAILAIPLYMSPSDVLGFLGEKHCKSIQHIRLLKTKDPNRIMALLKFKDQASVIRFYTEFNGKAFSQIDPETCHVLHIDKVNIKYPMESSDSSSTEQQLVGPSSKPFASTTPALIELPTCVVCLERMDSSITGLITIVCQHTFHCPCLQKWGNSSCPVCRYTQKVQSSEFQSKCTVCCYDKDLWICLICGNIGCGRYHDAHAKQHYVDTAHCYAMELETQRVWDYAGDNYVHRLLQSETDGKLVELSTDGKSSGWTGSSATESKLRDKMGLEYTQILVSQLESQRLYYESHLSNMSQKLSRVNEELVLKTKIATASSNANTDLRSRVDISESKLKKRDDKLKRVSSQLEHLKHNYEEEKSMNENLLVRIQTLEKQNTTKSDQIVSMQFQINDLNEQLRDLMFTISASQEIQKMGQSEELQNGTIVLPNNSTVRSNSVKSKKKKKKKPVVPSSSGSLGTD.

An RING-type zinc finger spans residues 208-248 (CVVCLERMDSSITGLITIVCQHTFHCPCLQKWGNSSCPVCR). The segment at 245–338 (PVCRYTQKVQ…GKLVELSTDG (94 aa)) adopts a UBP-type; degenerate zinc-finger fold. Zn(2+)-binding residues include C262, C265, C274, C277, C282, H289, H293, and H299. Polar residues predominate over residues 514–523 (LPNNSTVRSN). The disordered stretch occupies residues 514–547 (LPNNSTVRSNSVKSKKKKKKKPVVPSSSGSLGTD). The span at 526–535 (KSKKKKKKKP) shows a compositional bias: basic residues.

Its subcellular location is the cytoplasm. May act as a cytoplasmic retention protein with a role in regulating nuclear transport. This chain is RING finger protein ETP1 homolog, found in Schizosaccharomyces pombe (strain 972 / ATCC 24843) (Fission yeast).